A 229-amino-acid chain; its full sequence is Sperm flagellar protein 1 (229 aa).

The Calponin-homology (CH) domain maps to 7 to 115 (EETMQELYTW…TLRQKIEEKQ (109 aa)). The disordered stretch occupies residues 122–169 (ADLSQDQATQNNGNTHSDKGYKSNGTELSPRQGARVDPASKTHQGYAQ). Residues 123 to 136 (DLSQDQATQNNGNT) show a composition bias toward polar residues. Positions 178–229 (RFQLAEKEQTLILSQETIQILQAKLRRLEQLLLLKNVRIDDLTRRLQELEKK) are essential for homodimerization and microtubule bundling activity.

As to quaternary structure, homodimer.

The protein localises to the cytoplasm. It is found in the cytoskeleton. Its subcellular location is the cilium axoneme. The protein resides in the apical cell membrane. Its function is as follows. Microtubule-associated protein involved in the stabilization of microtubules along the axis of migration during radial intercalation. Promotes the establishment and stabilization of an axis of microtubules required for the active migration of cells into the outer epithelium. Microtubule-associated protein that promotes microtubule bundling and stabilizes microtubules against depolymerization in response to cold shock. Essential for ciliary central apparatus formation which requires both its microtubule-binding and bundling activities. Regulates planar cell polarity signaling pathway and asymmetric microtubule accumulation in ciliated epithelia. This Xenopus laevis (African clawed frog) protein is Sperm flagellar protein 1.